The chain runs to 555 residues: Methyl-coenzyme M reductase subunit alpha (555 aa).

Glutamine 152 is a coenzyme F430 binding site. Residues arginine 230, 261–262 (KH), and arginine 275 each bind coenzyme B. Coenzyme M is bound by residues tyrosine 337 and tyrosine 448.

It belongs to the methyl-coenzyme M reductase alpha subunit family. As to quaternary structure, MCR is a hexamer of two alpha, two beta, and two gamma chains, forming a dimer of heterotrimers. Requires coenzyme F430 as cofactor.

It is found in the cytoplasm. It carries out the reaction coenzyme B + methyl-coenzyme M = methane + coenzyme M-coenzyme B heterodisulfide. It participates in one-carbon metabolism; methyl-coenzyme M reduction; methane from methyl-coenzyme M: step 1/1. Its function is as follows. Component of the methyl-coenzyme M reductase (MCR) I that catalyzes the reductive cleavage of methyl-coenzyme M (CoM-S-CH3 or 2-(methylthio)ethanesulfonate) using coenzyme B (CoB or 7-mercaptoheptanoylthreonine phosphate) as reductant which results in the production of methane and the mixed heterodisulfide of CoB and CoM (CoM-S-S-CoB). This is the final step in methanogenesis. In Methanococcus voltae, this protein is Methyl-coenzyme M reductase subunit alpha (mcrA).